Consider the following 247-residue polypeptide: MKFFQEKISIKETNILLKVDNPKFFKMAKNTIINERLNLENYIFRNPIFLTSYSPVEVPDNVPEIVKLMAEAGFNADVGPMAAVAGTFSQLIVENLIENDCKNAISENGGDICLKCENDTTVGLYAGNSSLSGNLGFKLKKEKMKNGYGICTSSGTVGHSVSLGNADSVTVFSKSAIIADAAATSIGNFAVGIAVDAINNCLEKAENISKIDGVFVVIGEHAGKIGKIPQLIKTDKKEVLGNVFELV.

This sequence belongs to the UPF0280 family.

The sequence is that of UPF0280 protein MmarC6_1437 from Methanococcus maripaludis (strain C6 / ATCC BAA-1332).